The chain runs to 122 residues: Large ribosomal subunit protein uL14c (122 aa).

Belongs to the universal ribosomal protein uL14 family. In terms of assembly, part of the 50S ribosomal subunit.

It localises to the plastid. The protein resides in the chloroplast. Its function is as follows. Binds to 23S rRNA. The chain is Large ribosomal subunit protein uL14c from Angiopteris evecta (Mule's foot fern).